A 302-amino-acid chain; its full sequence is MPKSVSSHISLATSTGRSGPRDIRRCLSSRLRSVPPGARSASVSSKHRNGLRKFISDKVFFSILSHRHELGVDFLREMETPICTSKTVMLPLDLSTVAPGRCVSLSPFGHSSNMGFQCALCPSTENPTVAQGSRPQTMVGDALKKNNELCSVALAFYHHADKVIQHKTFYLSLLSHSMDVVRQSFLQPGLLYANLVLKTFGHDPLPIFTTNNGMLTMCILFKTRALHLGETALRLLMDNLPNYKISADCCRQSYVVKFVPTHPDTASIAVQVHTICEAVAALDCTDEMRDDIQKGTALVNAL.

Positions 1–17 are enriched in polar residues; that stretch reads MPKSVSSHISLATSTGR. A disordered region spans residues 1-22; it reads MPKSVSSHISLATSTGRSGPRD. The CCCH-type zinc finger occupies 102 to 227; sequence CVSLSPFGHS…CILFKTRALH (126 aa).

It belongs to the herpesviridae NEC1 protein family. In terms of assembly, forms a heterohexameric complex with NEC2. Interacts with capsid vertex specific component 2/CVC2; this interaction directs the capsid to the host inner nuclear membrane to initiate budding. Phosphorylated at serine residues in the N-terminus. This phosphorylation regulates the localization within the inner nuclear membrane.

It localises to the host nucleus inner membrane. Functionally, plays an essential role in virion nuclear egress, the first step of virion release from infected cell. Within the host nucleus, NEC1 interacts with the newly formed capsid through the vertexes and directs it to the inner nuclear membrane by associating with NEC2. Induces the budding of the capsid at the inner nuclear membrane as well as its envelopment into the perinuclear space. There, the NEC1/NEC2 complex promotes the fusion of the enveloped capsid with the outer nuclear membrane and the subsequent release of the viral capsid into the cytoplasm where it will reach the secondary budding sites in the host Golgi or trans-Golgi network. The chain is Nuclear egress protein 1 from Homo sapiens (Human).